Here is a 586-residue protein sequence, read N- to C-terminus: Pyruvate kinase (586 aa).

A substrate-binding site is contributed by Arg-32. K(+)-binding residues include Asn-34, Ser-36, Asp-66, and Thr-67. 34 to 37 contributes to the ATP binding site; the sequence is NFSH. Residues Arg-73 and Lys-156 each contribute to the ATP site. Glu-222 is a Mg(2+) binding site. 3 residues coordinate substrate: Gly-245, Asp-246, and Thr-278. Asp-246 contributes to the Mg(2+) binding site.

It belongs to the pyruvate kinase family. This sequence in the C-terminal section; belongs to the PEP-utilizing enzyme family. It depends on Mg(2+) as a cofactor. Requires K(+) as cofactor.

It catalyses the reaction pyruvate + ATP = phosphoenolpyruvate + ADP + H(+). It functions in the pathway carbohydrate degradation; glycolysis; pyruvate from D-glyceraldehyde 3-phosphate: step 5/5. The chain is Pyruvate kinase (pyk) from Staphylococcus haemolyticus (strain JCSC1435).